We begin with the raw amino-acid sequence, 307 residues long: Probable acetylxylan esterase A (307 aa).

A signal peptide spans 1–19; that stretch reads MILLSYLLTYLLCALTCSA. Ser-150 (charge relay system) is an active-site residue. N-linked (GlcNAc...) asparagine glycosylation is found at Asn-192 and Asn-270.

The protein belongs to the carbohydrate esterase 1 (CE1) family. AxeA subfamily. In terms of assembly, monomer.

The protein resides in the secreted. The catalysed reaction is Deacetylation of xylans and xylo-oligosaccharides.. The protein operates within glycan degradation; xylan degradation. Acetylxylan esterase involved in the hydrolysis of xylan, a major structural heterogeneous polysaccharide found in plant biomass representing the second most abundant polysaccharide in the biosphere, after cellulose. Degrades acetylated xylans by cleaving acetyl side groups from the hetero-xylan backbone. In Aspergillus flavus, this protein is Probable acetylxylan esterase A (axeA).